A 186-amino-acid chain; its full sequence is ADP-ribosylation factor-like protein 8B-A (186 aa).

The note=Mediates targeting to membranes intramembrane region spans 1 to 19 (MLALINRLLDWFKSLFWKE). Residues 29-35 (QYSGKTT), 71-75 (DIGGQ), and 130-133 (NKRD) each bind GTP.

This sequence belongs to the small GTPase superfamily. Arf family.

The protein resides in the late endosome membrane. It is found in the lysosome membrane. The protein localises to the cytoplasm. Its subcellular location is the cytoskeleton. It localises to the spindle. The protein resides in the early endosome membrane. Small GTPase which cycles between active GTP-bound and inactive GDP-bound states. In its active state, binds to a variety of effector proteins playing a key role in the regulation of lysosomal positioning which is important for nutrient sensing, natural killer cell-mediated cytotoxicity and antigen presentation. Along with its effectors, orchestrates lysosomal transport and fusion. The sequence is that of ADP-ribosylation factor-like protein 8B-A (arl8ba) from Danio rerio (Zebrafish).